The primary structure comprises 182 residues: Large ribosomal subunit protein bL25 (182 aa).

It belongs to the bacterial ribosomal protein bL25 family. CTC subfamily. Part of the 50S ribosomal subunit; part of the 5S rRNA/L5/L18/L25 subcomplex. Contacts the 5S rRNA. Binds to the 5S rRNA independently of L5 and L18.

In terms of biological role, this is one of the proteins that binds to the 5S RNA in the ribosome where it forms part of the central protuberance. This chain is Large ribosomal subunit protein bL25, found in Borrelia duttonii (strain Ly).